We begin with the raw amino-acid sequence, 175 residues long: Peptide deformylase (175 aa).

Positions 96 and 138 each coordinate Fe cation. The active site involves E139. H142 serves as a coordination point for Fe cation.

The protein belongs to the polypeptide deformylase family. The cofactor is Fe(2+).

It carries out the reaction N-terminal N-formyl-L-methionyl-[peptide] + H2O = N-terminal L-methionyl-[peptide] + formate. Its function is as follows. Removes the formyl group from the N-terminal Met of newly synthesized proteins. Requires at least a dipeptide for an efficient rate of reaction. N-terminal L-methionine is a prerequisite for activity but the enzyme has broad specificity at other positions. The sequence is that of Peptide deformylase from Helicobacter pylori (strain Shi470).